The following is a 352-amino-acid chain: Threonine synthase (352 aa).

Lys59 bears the N6-(pyridoxal phosphate)lysine mark. Residues Asn85, 185-189, and Thr314 contribute to the pyridoxal 5'-phosphate site; that span reads GNAGN.

Belongs to the threonine synthase family. It depends on pyridoxal 5'-phosphate as a cofactor.

The enzyme catalyses O-phospho-L-homoserine + H2O = L-threonine + phosphate. It participates in amino-acid biosynthesis; L-threonine biosynthesis; L-threonine from L-aspartate: step 5/5. Catalyzes the gamma-elimination of phosphate from L-phosphohomoserine and the beta-addition of water to produce L-threonine. This chain is Threonine synthase (thrC), found in Bacillus subtilis (strain 168).